Here is a 496-residue protein sequence, read N- to C-terminus: Fascin (496 aa).

It belongs to the fascin family.

It localises to the cytoplasm. The protein localises to the cytoskeleton. In terms of biological role, acts as an actin bundling protein. The sequence is that of Fascin from Strongylocentrotus purpuratus (Purple sea urchin).